A 427-amino-acid chain; its full sequence is Trigger factor (427 aa).

The PPIase FKBP-type domain maps to 165 to 250 (GDTVVIDFEG…LHEIQEQVPA (86 aa)).

This sequence belongs to the FKBP-type PPIase family. Tig subfamily.

Its subcellular location is the cytoplasm. The catalysed reaction is [protein]-peptidylproline (omega=180) = [protein]-peptidylproline (omega=0). Involved in protein export. Acts as a chaperone by maintaining the newly synthesized protein in an open conformation. Functions as a peptidyl-prolyl cis-trans isomerase. The protein is Trigger factor of Sulfurovum sp. (strain NBC37-1).